The following is a 917-amino-acid chain: Protein translocase subunit SecA (917 aa).

ATP-binding positions include Q87, 105-109, and D516; that span reads GEGKT. The Zn(2+) site is built by C901, C903, C912, and H913.

The protein belongs to the SecA family. As to quaternary structure, monomer and homodimer. Part of the essential Sec protein translocation apparatus which comprises SecA, SecYEG and auxiliary proteins SecDF-YajC and YidC. It depends on Zn(2+) as a cofactor.

It localises to the cell inner membrane. It is found in the cytoplasm. It carries out the reaction ATP + H2O + cellular proteinSide 1 = ADP + phosphate + cellular proteinSide 2.. Part of the Sec protein translocase complex. Interacts with the SecYEG preprotein conducting channel. Has a central role in coupling the hydrolysis of ATP to the transfer of proteins into and across the cell membrane, serving both as a receptor for the preprotein-SecB complex and as an ATP-driven molecular motor driving the stepwise translocation of polypeptide chains across the membrane. The protein is Protein translocase subunit SecA of Verminephrobacter eiseniae (strain EF01-2).